Here is a 336-residue protein sequence, read N- to C-terminus: Major histocompatibility complex class I-related protein 1 (336 aa).

Residues 1-18 (MMLLLPLIIVLMMKLSDA) form the signal peptide. Residues 19–105 (RTHSLRYFRL…KQLQHHYNHS (87 aa)) are alpha-1. The tract at residues 19-197 (RTHSLRYFRL…EYGKDALQRT (179 aa)) is antigen-binding cleft. The Extracellular segment spans residues 19–298 (RTHSLRYFRL…QESETILLVV (280 aa)). Residues Y25 and R27 each coordinate 8-(9H-purin-6-yl)-2-oxa-8-azabicyclo[3.3.1]nona-3,6-diene-4,6-dicarbaldehyde. Residues R27, S42, and K61 each contribute to the 5-(2-oxoethylideneamino)-6-(D-ribitylamino)uracil site. 5-(2-oxopropylideneamino)-6-(D-ribitylamino)uracil-binding residues include R27, S42, and K61. The 7-hydroxy-6-methyl-8-(1-D-ribityl)lumazine site is built by R27, S42, and K61. 8-(9H-purin-6-yl)-2-oxa-8-azabicyclo[3.3.1]nona-3,6-diene-4,6-dicarbaldehyde contacts are provided by K61 and H76. K61 serves as a coordination point for 2-amino-4-oxopteridine-6-carbaldehyde. Residue K61 coordinates pyridoxal. An N-linked (GlcNAc...) asparagine glycan is attached at N103. The segment at 106–197 (GFHTYQRMIG…EYGKDALQRT (92 aa)) is alpha-2. Position 112 (R112) interacts with 8-(9H-purin-6-yl)-2-oxa-8-azabicyclo[3.3.1]nona-3,6-diene-4,6-dicarbaldehyde. 5-(2-oxoethylideneamino)-6-(D-ribitylamino)uracil is bound by residues R112, Y170, and Q171. Positions 112, 170, and 171 each coordinate 5-(2-oxopropylideneamino)-6-(D-ribitylamino)uracil. R112, Y170, and Q171 together coordinate 7-hydroxy-6-methyl-8-(1-D-ribityl)lumazine. 2 cysteine pairs are disulfide-bonded: C116-C179 and C218-C274. The tract at residues 198–289 (EPPKVRVNHK…GVHMVLQGFQ (92 aa)) is alpha-3. The region spanning 200-295 (PKVRVNHKET…QGFQESETIL (96 aa)) is the Ig-like C1-type domain. The connecting peptide stretch occupies residues 290–298 (ESETILLVV). A helical membrane pass occupies residues 299–319 (KAVGFIVLAIALAGVGILAWR). Residues 320-336 (KRPRGKNKVICLSTPEH) lie on the Cytoplasmic side of the membrane.

This sequence belongs to the MHC class I family. Heterotrimer that consists of MR1, B2M and metabolite antigen. Major classes of metabolite ligands presented by MR1 include riboflavin-related antigens, pyrimidines and ribityl lumazines, nucleobase adducts and folate derivatives. Forms reversible covalent Schiff base complexes with microbial pyrimidine-based metabolite, which serves as a molecular switch triggering complete folding, stable association with B2M and translocation of the ternary complex from endoplasmic reticulum to the plasma membrane. Alternatively, forms non-Schiff base complexes with ribityl lumazines. On antigen-presenting cells, the ternary complex interacts with TCR on MR1-restricted T cells. Interacts with TAPBP and TAPBPL chaperones in the endoplasmic reticulum. TAPBP associated or not with MHC class I peptide loading complex binds ligand-free MR1 or MR1-B2M complex, providing for stable MR1 pools ready for metabolite antigen processing. TAPBPL interacts with MR1 in a ligand-independent way; this interaction may stabilize MR1 pool and facilitate ligand loading and dissociation. Structurally, MR1-B2M heterodimer adopts a topology similar to classical MHC class I molecules, with alpha-1 and alpha-2 domains of MR1 forming the antigen-binding cleft composed of two alpha-helices resting on a floor of 7-stranded anti-parallel beta-pleated sheet. MR1-B2M heterodimer (via alpha-helices) interacts with TCR (via CDR domains). In terms of processing, N-glycosylated.

It localises to the cell membrane. Its subcellular location is the endoplasmic reticulum membrane. The protein localises to the golgi apparatus membrane. The protein resides in the early endosome membrane. It is found in the late endosome membrane. Antigen-presenting molecule specialized in displaying microbial pyrimidine-based metabolites to alpha-beta T cell receptors (TCR) on innate-type mucosal-associated invariant T (MAIT) cells. In complex with B2M preferentially presents riboflavin-derived metabolites to semi-invariant TCRs on MAIT cells, guiding immune surveillance of the microbial metabolome at mucosal epithelial barriers. Signature pyrimidine-based microbial antigens are generated via non-enzymatic condensation of metabolite intermediates of the riboflavin pathway with by-products arising from other metabolic pathways such as glycolysis. Typical potent antigenic metabolites are 5-(2-oxoethylideneamino)-6-D-ribitylaminouracil (5-OE-RU) and 5-(2-oxopropylideneamino)-6-D-ribitylaminouracil (5-OP-RU), products of condensation of 5-amino-6-D-ribityaminouracil (5-A-RU) with glyoxal or methylglyoxal by-products, respectively. May present microbial antigens to various MAIT cell subsets, providing for unique recognition of diverse microbes, including pathogens that do not synthesize riboflavin. Upon antigen recognition, elicits rapid innate-type MAIT cell activation to eliminate pathogenic microbes by directly killing infected cells. During T cell development, drives thymic selection and post-thymic terminal differentiation of MAIT cells in a process dependent on commensal microflora. Acts as an immune sensor of cancer cell metabolome. May present a tumor-specific or -associated metabolite essential for cancer cell survival to a pan-cancer TCR on a non-MAIT CD8-positive T cell clone, triggering T cell-mediated killing of a wide range of cancer cell types. May present tumor-enriched pyridoxal and pyridoxal 5'-phosphate antigens, enabling preferential recognition of cancer cells. Presents nucleobase carbonyl adducts generated during oxidative stress. Captures M3Ade, a nucleobase adduct composed of one adenine modified by a malondialdehyde trimer, for recognition by MR1-restricted T cell clones expressing a polyclonal TCR repertoire. This Bos taurus (Bovine) protein is Major histocompatibility complex class I-related protein 1.